The sequence spans 102 residues: MATKFQEGGQLEAQRSRLGPPKMYKVVLLNDDYTPMDFVITVLQRFFSLDTEQATRIMLKVHNEGRGVCGVFPRDIAATKVEQVSAFARQHQHPLACIMEEN.

This sequence belongs to the ClpS family. As to quaternary structure, binds to the N-terminal domain of the chaperone ClpA.

Its function is as follows. Involved in the modulation of the specificity of the ClpAP-mediated ATP-dependent protein degradation. In Dechloromonas aromatica (strain RCB), this protein is ATP-dependent Clp protease adapter protein ClpS.